A 401-amino-acid chain; its full sequence is Phosphonopyruvate decarboxylase (401 aa).

The disordered stretch occupies residues 382-401 (WPASAVGSGTRAAAGSAGDR). Positions 384–401 (ASAVGSGTRAAAGSAGDR) are enriched in low complexity.

Belongs to the TPP enzyme family. Requires thiamine diphosphate as cofactor. Mg(2+) serves as cofactor.

The enzyme catalyses 3-phosphonopyruvate + H(+) = phosphonoacetaldehyde + CO2. It participates in secondary metabolite biosynthesis; bialaphos biosynthesis. In terms of biological role, involved in the biosynthesis of phosphinothricin tripeptide (PTT), also known as bialaphos (BA), a natural-product antibiotic and potent herbicide. Catalyzes the decarboxylation of phosphonopyruvate (PnPy) to generate phosphonoacetaldehyde (PnAA). This is Phosphonopyruvate decarboxylase from Streptomyces hygroscopicus.